Here is a 569-residue protein sequence, read N- to C-terminus: Protein misato homolog 1 (569 aa).

Serine 41 and serine 495 each carry phosphoserine.

Belongs to the misato family.

It localises to the mitochondrion outer membrane. It is found in the cytoplasm. Functionally, involved in the regulation of mitochondrial distribution and morphology. Required for mitochondrial fusion and mitochondrial network formation. The sequence is that of Protein misato homolog 1 (MSTO1) from Macaca fascicularis (Crab-eating macaque).